Here is a 210-residue protein sequence, read N- to C-terminus: Protein GrpE (210 aa).

It belongs to the GrpE family. As to quaternary structure, homodimer.

Its subcellular location is the cytoplasm. Functionally, participates actively in the response to hyperosmotic and heat shock by preventing the aggregation of stress-denatured proteins, in association with DnaK and GrpE. It is the nucleotide exchange factor for DnaK and may function as a thermosensor. Unfolded proteins bind initially to DnaJ; upon interaction with the DnaJ-bound protein, DnaK hydrolyzes its bound ATP, resulting in the formation of a stable complex. GrpE releases ADP from DnaK; ATP binding to DnaK triggers the release of the substrate protein, thus completing the reaction cycle. Several rounds of ATP-dependent interactions between DnaJ, DnaK and GrpE are required for fully efficient folding. This chain is Protein GrpE, found in Rhizobium leguminosarum bv. trifolii (strain WSM2304).